Reading from the N-terminus, the 500-residue chain is NAD(P)H-quinone oxidoreductase subunit 2, chloroplastic (500 aa).

13 helical membrane passes run 15-35 (ILPE…DLSL), 42-62 (WIIY…CLQW), 79-99 (FSIA…LLSI), 109-129 (LMEF…LCGA), 132-152 (LITI…LAGY), 167-187 (LLVG…LYGL), 201-221 (LIFA…CIIV), 247-267 (VVAF…IRII), 278-298 (WQFL…LVAI), 306-326 (MLAY…ISST), 334-354 (LVYM…VILF), 377-397 (ASCL…AGFF), and 400-420 (IYLF…VGLL).

This sequence belongs to the complex I subunit 2 family. As to quaternary structure, NDH is composed of at least 16 different subunits, 5 of which are encoded in the nucleus.

It is found in the plastid. Its subcellular location is the chloroplast thylakoid membrane. The enzyme catalyses a plastoquinone + NADH + (n+1) H(+)(in) = a plastoquinol + NAD(+) + n H(+)(out). The catalysed reaction is a plastoquinone + NADPH + (n+1) H(+)(in) = a plastoquinol + NADP(+) + n H(+)(out). Functionally, NDH shuttles electrons from NAD(P)H:plastoquinone, via FMN and iron-sulfur (Fe-S) centers, to quinones in the photosynthetic chain and possibly in a chloroplast respiratory chain. The immediate electron acceptor for the enzyme in this species is believed to be plastoquinone. Couples the redox reaction to proton translocation, and thus conserves the redox energy in a proton gradient. This is NAD(P)H-quinone oxidoreductase subunit 2, chloroplastic from Chaetosphaeridium globosum (Charophycean green alga).